Consider the following 266-residue polypeptide: Translation initiation factor 2 subunit alpha (266 aa).

Residues 12 to 83 (GEILIATVKQ…RKGTVDVSLK (72 aa)) form the S1 motif domain.

This sequence belongs to the eIF-2-alpha family. In terms of assembly, heterotrimer composed of an alpha, a beta and a gamma chain.

Functionally, eIF-2 functions in the early steps of protein synthesis by forming a ternary complex with GTP and initiator tRNA. This chain is Translation initiation factor 2 subunit alpha, found in Saccharolobus islandicus (strain L.S.2.15 / Lassen #1) (Sulfolobus islandicus).